We begin with the raw amino-acid sequence, 342 residues long: Dihydroorotase (342 aa).

The Zn(2+) site is built by H13 and H15. Residues 15–17 (HLR) and N41 each bind substrate. Zn(2+) is bound by residues K98, H135, and H173. N6-carboxylysine is present on K98. A substrate-binding site is contributed by H135. L218 is a binding site for substrate. Zn(2+) is bound at residue D246. The active site involves D246. H250 and A262 together coordinate substrate.

It belongs to the metallo-dependent hydrolases superfamily. DHOase family. Class II DHOase subfamily. As to quaternary structure, homodimer. The cofactor is Zn(2+).

It catalyses the reaction (S)-dihydroorotate + H2O = N-carbamoyl-L-aspartate + H(+). Its pathway is pyrimidine metabolism; UMP biosynthesis via de novo pathway; (S)-dihydroorotate from bicarbonate: step 3/3. In terms of biological role, catalyzes the reversible cyclization of carbamoyl aspartate to dihydroorotate. This is Dihydroorotase from Vibrio atlanticus (strain LGP32) (Vibrio splendidus (strain Mel32)).